A 147-amino-acid chain; its full sequence is Leghemoglobin 6 (147 aa).

Residues 2-147 form the Globin domain; that stretch reads SFTDKQEALV…LATEIKKAMS (146 aa). Residues Tyr-25 and Tyr-30 each carry the nitrated tyrosine modification. A heme b-binding site is contributed by Ser-45. Ser-45 carries the phosphoserine modification. His-62 is a binding site for O2. Residues Lys-65, His-94, and Lys-97 each contribute to the heme b site. Tyr-135 is modified (nitrated tyrosine).

This sequence belongs to the plant globin family. As to quaternary structure, monomer. In terms of processing, nitrated in effective nodules and particularly in hypoxic conditions; this mechanism may play a protective role in the symbiosis by buffering toxic peroxynitrite NO(2)(-). Nitration level decrease during nodule senescence. Post-translationally, phosphorylation at Ser-45 disrupts the molecular environment of its porphyrin ring oxygen binding pocket, thus leading to a reduced oxygen consumption and to the delivery of oxygen O(2) to symbiosomes. As to expression, root nodules.

It is found in the cytoplasm. Its subcellular location is the cytosol. The protein localises to the nucleus. Functionally, leghemoglobin that reversibly binds oxygen O(2) through a pentacoordinated heme iron. In root nodules, facilitates the diffusion of oxygen to the bacteroids while preventing the bacterial nitrogenase from being inactivated by buffering dioxygen, nitric oxide and carbon monoxide, and promoting the formation of reactive oxygen species (ROS, e.g. H(2)O(2)). This role is essential for symbiotic nitrogen fixation (SNF). In Medicago truncatula (Barrel medic), this protein is Leghemoglobin 6.